The following is a 679-amino-acid chain: DNA ligase (679 aa).

NAD(+)-binding positions include 36–40 (DAQYD), 85–86 (SL), and glutamate 116. Lysine 118 functions as the N6-AMP-lysine intermediate in the catalytic mechanism. NAD(+) is bound by residues arginine 139, glutamate 174, lysine 300, and lysine 324. Cysteine 418, cysteine 421, cysteine 436, and cysteine 441 together coordinate Zn(2+). A BRCT domain is found at 600–679 (EGGGPLNGKV…NEFRELTGRK (80 aa)).

This sequence belongs to the NAD-dependent DNA ligase family. LigA subfamily. Mg(2+) serves as cofactor. It depends on Mn(2+) as a cofactor.

The catalysed reaction is NAD(+) + (deoxyribonucleotide)n-3'-hydroxyl + 5'-phospho-(deoxyribonucleotide)m = (deoxyribonucleotide)n+m + AMP + beta-nicotinamide D-nucleotide.. Its function is as follows. DNA ligase that catalyzes the formation of phosphodiester linkages between 5'-phosphoryl and 3'-hydroxyl groups in double-stranded DNA using NAD as a coenzyme and as the energy source for the reaction. It is essential for DNA replication and repair of damaged DNA. In Pelotomaculum thermopropionicum (strain DSM 13744 / JCM 10971 / SI), this protein is DNA ligase.